The primary structure comprises 442 residues: MAFEFKLPDIGEGIHEGEIVKWFVKPNDEVDEDDVLAEVQNDKAVVEIPSPVKGKVLELKVEEGTVATVGQTIITFDAPGYEDLQFKGSDESDDAKTEAQVQSTAEAGQDVAKEEQAQEPAKATGAGQQDQAEVDPNKRVIAMPSVRKYAREKGVDIRKVTGSGNNGRVVKEDIDSFVNGGAQEAAPQETAAPQETAAKPAAAPAPEGEFPETREKMSGIRKAIAKAMVNSKHTAPHVTLMDEVDVTNLVAHRKQFKQVAADQGIKLTYLPYVVKALTSALKKFPVLNTSIDDKTDEVIQKHYFNIGIAADTEKGLLVPVVKNADRKSVFEISDEINGLATKAREGKLAPAEMKGASCTITNIGSAGGQWFTPVINHPEVAILGIGRIAEKAIVRDGEIVAAPVLALSLSFDHRMIDGATAQNALNHIKRLLNDPQLILMEA.

The Lipoyl-binding domain occupies 2–77; the sequence is AFEFKLPDIG…TVGQTIITFD (76 aa). Lys-43 is subject to N6-lipoyllysine. Residues 84–97 show a composition bias toward basic and acidic residues; sequence LQFKGSDESDDAKT. The disordered stretch occupies residues 84 to 136; that stretch reads LQFKGSDESDDAKTEAQVQSTAEAGQDVAKEEQAQEPAKATGAGQQDQAEVDP. Residues 141 to 178 form the Peripheral subunit-binding (PSBD) domain; sequence IAMPSVRKYAREKGVDIRKVTGSGNNGRVVKEDIDSFV. A compositionally biased stretch (low complexity) spans 182 to 208; that stretch reads AQEAAPQETAAPQETAAKPAAAPAPEG. Residues 182-215 are disordered; that stretch reads AQEAAPQETAAPQETAAKPAAAPAPEGEFPETRE. The active site involves His-413.

This sequence belongs to the 2-oxoacid dehydrogenase family. In terms of assembly, forms a 24-polypeptide structural core with octahedral symmetry. It depends on (R)-lipoate as a cofactor.

It catalyses the reaction N(6)-[(R)-dihydrolipoyl]-L-lysyl-[protein] + acetyl-CoA = N(6)-[(R)-S(8)-acetyldihydrolipoyl]-L-lysyl-[protein] + CoA. Its function is as follows. The pyruvate dehydrogenase complex catalyzes the overall conversion of pyruvate to acetyl-CoA and CO(2). It contains multiple copies of three enzymatic components: pyruvate dehydrogenase (E1), dihydrolipoamide acetyltransferase (E2) and lipoamide dehydrogenase (E3). In terms of biological role, the B.subtilis PDH complex also possesses branched-chain 2-oxoacid dehydrogenase (BCDH) activity. The polypeptide is Dihydrolipoyllysine-residue acetyltransferase component of pyruvate dehydrogenase complex (pdhC) (Bacillus subtilis (strain 168)).